The sequence spans 525 residues: Putative ribose/galactose/methyl galactoside import ATP-binding protein (525 aa).

A compositionally biased stretch (polar residues) spans 1–15 (MFGSATANPPAQRNL). Residues 1-23 (MFGSATANPPAQRNLPSGDGDGG) form a disordered region. ABC transporter domains follow at residues 33-269 (LEIS…VGRE) and 279-523 (KPAG…SGHK). Residue 65–72 (GENGAGKS) participates in ATP binding.

It belongs to the ABC transporter superfamily. Carbohydrate importer 2 (CUT2) (TC 3.A.1.2) family.

The protein resides in the cell inner membrane. The enzyme catalyses D-ribose(out) + ATP + H2O = D-ribose(in) + ADP + phosphate + H(+). It catalyses the reaction D-galactose(out) + ATP + H2O = D-galactose(in) + ADP + phosphate + H(+). In terms of biological role, part of an ABC transporter complex involved in carbohydrate import. Could be involved in ribose, galactose and/or methyl galactoside import. Responsible for energy coupling to the transport system. The protein is Putative ribose/galactose/methyl galactoside import ATP-binding protein of Pseudomonas syringae pv. syringae (strain B728a).